A 501-amino-acid polypeptide reads, in one-letter code: Aldehyde dehydrogenase 1A1 (501 aa).

N-acetylserine is present on Ser-2. N6-acetyllysine is present on residues Lys-91 and Lys-128. Residues 167 to 170 (IPWN), 193 to 196 (KPAE), 226 to 227 (GP), and 246 to 247 (GS) each bind NAD(+). Lys-252 is subject to N6-acetyllysine. The Proton acceptor role is filled by Glu-269. Position 269–271 (269–271 (ELG)) interacts with NAD(+). Cys-303 acts as the Nucleophile in catalysis. The interval 336-501 (LTPGINQGPQ…VAMKISQKNS (166 aa)) is mediates interaction with PRMT3. Phosphothreonine is present on Thr-337. 349–353 (EQHDK) lines the NAD(+) pocket. Lys-353 and Lys-367 each carry N6-acetyllysine. 400-402 (EIF) lines the NAD(+) pocket. Lys-410 carries the N6-acetyllysine modification. Phosphoserine is present on Ser-413. An N6-acetyllysine mark is found at Lys-419, Lys-435, and Lys-495.

This sequence belongs to the aldehyde dehydrogenase family. Homotetramer. Interacts with PRMT3; the interaction is direct, inhibits ALDH1A1 aldehyde dehydrogenase activity and is independent of the methyltransferase activity of PRMT3. Post-translationally, the N-terminus is blocked most probably by acetylation. Expressed in retina. Expressed in lens and cornea (at protein level). Expressed by midbrain dopamine neurons.

The protein resides in the cytoplasm. The protein localises to the cytosol. It is found in the cell projection. It localises to the axon. The enzyme catalyses an aldehyde + NAD(+) + H2O = a carboxylate + NADH + 2 H(+). The catalysed reaction is all-trans-retinal + NAD(+) + H2O = all-trans-retinoate + NADH + 2 H(+). It catalyses the reaction 9-cis-retinal + NAD(+) + H2O = 9-cis-retinoate + NADH + 2 H(+). It carries out the reaction 11-cis-retinal + NAD(+) + H2O = 11-cis-retinoate + NADH + 2 H(+). The enzyme catalyses 13-cis-retinal + NAD(+) + H2O = 13-cis-retinoate + NADH + 2 H(+). The catalysed reaction is 4-aminobutanal + NAD(+) + H2O = 4-aminobutanoate + NADH + 2 H(+). It catalyses the reaction 3-deoxyglucosone + NAD(+) + H2O = 2-dehydro-3-deoxy-D-gluconate + NADH + 2 H(+). It carries out the reaction (E)-4-hydroxynon-2-enal + NAD(+) + H2O = (E)-4-hydroxynon-2-enoate + NADH + 2 H(+). The enzyme catalyses malonaldehyde + NAD(+) + H2O = 3-oxopropanoate + NADH + 2 H(+). The catalysed reaction is hexanal + NAD(+) + H2O = hexanoate + NADH + 2 H(+). It catalyses the reaction propanal + NAD(+) + H2O = propanoate + NADH + 2 H(+). It carries out the reaction acetaldehyde + NAD(+) + H2O = acetate + NADH + 2 H(+). The enzyme catalyses benzaldehyde + NAD(+) + H2O = benzoate + NADH + 2 H(+). It participates in cofactor metabolism; retinol metabolism. The aminobutyraldehyde dehydrogenase activity is negatively regulated by ethanol in vivo. Cytosolic dehydrogenase that catalyzes the irreversible oxidation of a wide range of aldehydes to their corresponding carboxylic acid. Functions downstream of retinol dehydrogenases and catalyzes the oxidation of retinaldehyde into retinoic acid, the second step in the oxidation of retinol/vitamin A into retinoic acid. This pathway is crucial to control the levels of retinol and retinoic acid, two important molecules which excess can be teratogenic and cytotoxic. Also oxidizes aldehydes resulting from lipid peroxidation like (E)-4-hydroxynon-2-enal/HNE, malonaldehyde and hexanal that form protein adducts and are highly cytotoxic. By participating for instance to the clearance of (E)-4-hydroxynon-2-enal/HNE in the lens epithelium prevents the formation of HNE-protein adducts and lens opacification. Also functions downstream of fructosamine-3-kinase in the fructosamine degradation pathway by catalyzing the oxidation of 3-deoxyglucosone, the carbohydrate product of fructosamine 3-phosphate decomposition, which is itself a potent glycating agent that may react with lysine and arginine side-chains of proteins. Also has an aminobutyraldehyde dehydrogenase activity and is probably part of an alternative pathway for the biosynthesis of GABA/4-aminobutanoate in midbrain, thereby playing a role in GABAergic synaptic transmission. In Mus musculus (Mouse), this protein is Aldehyde dehydrogenase 1A1.